The following is a 48-amino-acid chain: uncharacterized protein (48 aa).

A signal peptide spans 1-21 (MLENNVFRLMILMGGVIALIA).

This is an uncharacterized protein from Bacillus anthracis.